A 325-amino-acid chain; its full sequence is Phenylalanine--tRNA ligase alpha subunit (325 aa).

Mg(2+) is bound at residue Glu-251.

Belongs to the class-II aminoacyl-tRNA synthetase family. Phe-tRNA synthetase alpha subunit type 1 subfamily. In terms of assembly, tetramer of two alpha and two beta subunits. The cofactor is Mg(2+).

It localises to the cytoplasm. The enzyme catalyses tRNA(Phe) + L-phenylalanine + ATP = L-phenylalanyl-tRNA(Phe) + AMP + diphosphate + H(+). The sequence is that of Phenylalanine--tRNA ligase alpha subunit from Thermotoga petrophila (strain ATCC BAA-488 / DSM 13995 / JCM 10881 / RKU-1).